The following is a 141-amino-acid chain: Hemoglobin subunit alpha (141 aa).

Positions 2 to 141 (AFTACEKQTI…ICQELSSRYR (140 aa)) constitute a Globin domain. An O2-binding site is contributed by His-59. His-88 serves as a coordination point for heme b.

The protein belongs to the globin family. As to quaternary structure, heterotetramer of two alpha chains and two beta chains. In terms of tissue distribution, red blood cells.

Its function is as follows. Involved in oxygen transport from gills to the various peripheral tissues. This is Hemoglobin subunit alpha (HBA) from Mustelus griseus (Spotless smooth-hound).